A 300-amino-acid polypeptide reads, in one-letter code: Acetylglutamate kinase (300 aa).

Residues 68–69 (GG), Arg-90, and Asn-195 each bind substrate.

This sequence belongs to the acetylglutamate kinase family. ArgB subfamily.

The protein resides in the cytoplasm. It catalyses the reaction N-acetyl-L-glutamate + ATP = N-acetyl-L-glutamyl 5-phosphate + ADP. It functions in the pathway amino-acid biosynthesis; L-arginine biosynthesis; N(2)-acetyl-L-ornithine from L-glutamate: step 2/4. In terms of biological role, catalyzes the ATP-dependent phosphorylation of N-acetyl-L-glutamate. The chain is Acetylglutamate kinase from Halorhodospira halophila (strain DSM 244 / SL1) (Ectothiorhodospira halophila (strain DSM 244 / SL1)).